A 262-amino-acid chain; its full sequence is Acyl-[acyl-carrier-protein]--UDP-N-acetylglucosamine O-acyltransferase (262 aa).

This sequence belongs to the transferase hexapeptide repeat family. LpxA subfamily. In terms of assembly, homotrimer.

The protein resides in the cytoplasm. The catalysed reaction is a (3R)-hydroxyacyl-[ACP] + UDP-N-acetyl-alpha-D-glucosamine = a UDP-3-O-[(3R)-3-hydroxyacyl]-N-acetyl-alpha-D-glucosamine + holo-[ACP]. It functions in the pathway glycolipid biosynthesis; lipid IV(A) biosynthesis; lipid IV(A) from (3R)-3-hydroxytetradecanoyl-[acyl-carrier-protein] and UDP-N-acetyl-alpha-D-glucosamine: step 1/6. Involved in the biosynthesis of lipid A, a phosphorylated glycolipid that anchors the lipopolysaccharide to the outer membrane of the cell. The polypeptide is Acyl-[acyl-carrier-protein]--UDP-N-acetylglucosamine O-acyltransferase (Paraburkholderia phymatum (strain DSM 17167 / CIP 108236 / LMG 21445 / STM815) (Burkholderia phymatum)).